The chain runs to 511 residues: Phenylalanine--tRNA ligase alpha subunit (511 aa).

Residues T352, 390–392, Y429, and F455 each bind L-phenylalanine; that span reads QVE.

Belongs to the class-II aminoacyl-tRNA synthetase family. Phe-tRNA synthetase alpha subunit type 2 subfamily. Tetramer of two alpha and two beta subunits. Requires Mg(2+) as cofactor.

It localises to the cytoplasm. It carries out the reaction tRNA(Phe) + L-phenylalanine + ATP = L-phenylalanyl-tRNA(Phe) + AMP + diphosphate + H(+). The protein is Phenylalanine--tRNA ligase alpha subunit of Methanothermobacter thermautotrophicus (strain ATCC 29096 / DSM 1053 / JCM 10044 / NBRC 100330 / Delta H) (Methanobacterium thermoautotrophicum).